The sequence spans 50 residues: MAVPKKRTSISKKLIRKNFWKKRGYWTALKAFSLAQSIFTGNSKSFFCNK.

Belongs to the bacterial ribosomal protein bL32 family.

It is found in the plastid. The protein resides in the chloroplast. This Lotus japonicus (Lotus corniculatus var. japonicus) protein is Large ribosomal subunit protein bL32c.